The chain runs to 296 residues: Regulatory protein PchR (296 aa).

The region spanning 201–296 (HAARDLLVGA…RYGISPSEIR (96 aa)) is the HTH araC/xylS-type domain. 2 DNA-binding regions (H-T-H motif) span residues 218-239 (DTLA…RKVF) and 266-288 (VSTV…RKRY).

Its function is as follows. Positive activator of the genes for pyochelin and ferripyochelin receptors. In Pseudomonas aeruginosa (strain ATCC 15692 / DSM 22644 / CIP 104116 / JCM 14847 / LMG 12228 / 1C / PRS 101 / PAO1), this protein is Regulatory protein PchR (pchR).